We begin with the raw amino-acid sequence, 187 residues long: Calmodulin-like protein 30 (187 aa).

Residues 21–47 form a disordered region; sequence KPSRMFSRDRQSSGLSSPGPGGFSQPS. The span at 32–47 shows a compositional bias: low complexity; sequence SSGLSSPGPGGFSQPS. 4 consecutive EF-hand domains span residues 46 to 81, 82 to 117, 129 to 152, and 153 to 187; these read PSVN…LGQE, RAIE…SGGI, FDLN…LGER, and CSLE…SNNV. Asp-59, Asp-61, Asp-63, Lys-65, Glu-70, Asp-95, Asp-97, Asp-99, Glu-106, Asp-130, Asn-132, Asp-134, Lys-136, Glu-141, Asp-166, Asp-168, Asp-170, and Glu-177 together coordinate Ca(2+).

This sequence belongs to the calmodulin family.

Potential calcium sensor. The polypeptide is Calmodulin-like protein 30 (Arabidopsis thaliana (Mouse-ear cress)).